A 423-amino-acid polypeptide reads, in one-letter code: UDP-N-acetylglucosamine 1-carboxyvinyltransferase (423 aa).

Position 22–23 (22–23 (KN)) interacts with phosphoenolpyruvate. A UDP-N-acetyl-alpha-D-glucosamine-binding site is contributed by R93. C117 acts as the Proton donor in catalysis. At C117 the chain carries 2-(S-cysteinyl)pyruvic acid O-phosphothioketal. Residues D305 and I327 each contribute to the UDP-N-acetyl-alpha-D-glucosamine site.

Belongs to the EPSP synthase family. MurA subfamily.

The protein localises to the cytoplasm. The catalysed reaction is phosphoenolpyruvate + UDP-N-acetyl-alpha-D-glucosamine = UDP-N-acetyl-3-O-(1-carboxyvinyl)-alpha-D-glucosamine + phosphate. Its pathway is cell wall biogenesis; peptidoglycan biosynthesis. Functionally, cell wall formation. Adds enolpyruvyl to UDP-N-acetylglucosamine. The chain is UDP-N-acetylglucosamine 1-carboxyvinyltransferase from Acidithiobacillus ferrooxidans (strain ATCC 23270 / DSM 14882 / CIP 104768 / NCIMB 8455) (Ferrobacillus ferrooxidans (strain ATCC 23270)).